The chain runs to 527 residues: TnpB-like protein R854 (527 aa).

Residues 21–36 (GSKTKKKVFVKKKPPA) show a composition bias toward basic residues. The segment at 21 to 50 (GSKTKKKVFVKKKPPAKKPPDKKPLKKTTK) is disordered. Zn(2+) contacts are provided by C481, C484, C498, and C501.

It in the central section; belongs to the transposase 2 family. This sequence in the C-terminal section; belongs to the transposase 35 family.

In Acanthamoeba polyphaga mimivirus (APMV), this protein is TnpB-like protein R854.